Reading from the N-terminus, the 427-residue chain is Enolase (427 aa).

(2R)-2-phosphoglycerate is bound at residue Gln163. Residue Glu205 is the Proton donor of the active site. 3 residues coordinate Mg(2+): Asp242, Glu285, and Asp312. (2R)-2-phosphoglycerate-binding residues include Lys337, Arg366, Ser367, and Lys388. Catalysis depends on Lys337, which acts as the Proton acceptor.

Belongs to the enolase family. Requires Mg(2+) as cofactor.

The protein localises to the cytoplasm. The protein resides in the secreted. It localises to the cell surface. The enzyme catalyses (2R)-2-phosphoglycerate = phosphoenolpyruvate + H2O. It functions in the pathway carbohydrate degradation; glycolysis; pyruvate from D-glyceraldehyde 3-phosphate: step 4/5. Functionally, catalyzes the reversible conversion of 2-phosphoglycerate (2-PG) into phosphoenolpyruvate (PEP). It is essential for the degradation of carbohydrates via glycolysis. The protein is Enolase of Polaromonas sp. (strain JS666 / ATCC BAA-500).